A 278-amino-acid chain; its full sequence is Formamidopyrimidine-DNA glycosylase (278 aa).

Proline 2 serves as the catalytic Schiff-base intermediate with DNA. The active-site Proton donor is glutamate 3. Lysine 58 functions as the Proton donor; for beta-elimination activity in the catalytic mechanism. DNA contacts are provided by histidine 92 and arginine 111. The segment at 239–273 (HVYGKKGVPCERCGTPIEKIKVAQRGTHFCPKCQI) adopts an FPG-type zinc-finger fold. Arginine 263 functions as the Proton donor; for delta-elimination activity in the catalytic mechanism.

Belongs to the FPG family. Monomer. Zn(2+) is required as a cofactor.

It catalyses the reaction Hydrolysis of DNA containing ring-opened 7-methylguanine residues, releasing 2,6-diamino-4-hydroxy-5-(N-methyl)formamidopyrimidine.. The catalysed reaction is 2'-deoxyribonucleotide-(2'-deoxyribose 5'-phosphate)-2'-deoxyribonucleotide-DNA = a 3'-end 2'-deoxyribonucleotide-(2,3-dehydro-2,3-deoxyribose 5'-phosphate)-DNA + a 5'-end 5'-phospho-2'-deoxyribonucleoside-DNA + H(+). Its function is as follows. Involved in base excision repair of DNA damaged by oxidation or by mutagenic agents. Acts as a DNA glycosylase that recognizes and removes damaged bases. Has a preference for oxidized purines, such as 7,8-dihydro-8-oxoguanine (8-oxoG). Has AP (apurinic/apyrimidinic) lyase activity and introduces nicks in the DNA strand. Cleaves the DNA backbone by beta-delta elimination to generate a single-strand break at the site of the removed base with both 3'- and 5'-phosphates. The chain is Formamidopyrimidine-DNA glycosylase from Latilactobacillus sakei subsp. sakei (strain 23K) (Lactobacillus sakei subsp. sakei).